Consider the following 718-residue polypeptide: Tegument protein UL46 (718 aa).

2 disordered regions span residues 433–510 and 581–611; these read SAGP…EPPA and TADDDDDDARRKATHAASARERHAPYEDDES. Residues 444–454 are compositionally biased toward gly residues; the sequence is GPGGHRAGGGT. The segment covering 455 to 467 has biased composition (basic and acidic residues); it reads CREKIQRARRDNE.

The protein belongs to the herpesviridae HHV-1 VP11/12 protein family. In terms of assembly, interacts with VP16. Interacts with host LCK, PIK3R1, SHC1 AND GRB2; these interactions promote the activation of the PI3K/AKT pathway. Interacts with host YWHAB. Interacts with ICP0; this interaction targets UL46 for degradation by the proteasome. Interacts (via N-terminus) with host TMEM173. Interacts (via C-terminus) with host TBK1. Interacts with host DOK2. Phosphorylated by host LCK. The phosphorylation seems to be lymphocyte-specific.

The protein localises to the virion tegument. It localises to the host cytoplasm. The protein resides in the host cell membrane. Plays a role in the activation of the host PI3K/AKT pathway to promote cell survival. Interacts with and activates host LCK and thereby recruits downstream partners SHC1, GRB2 and PI3KR1 in order to activate the PI3K pathway by phosphorylating host AKT on its activating residues. This mechanism is inhibited by the viral protein US3 that instead promotes incorporation of UL46 into virions. Plays a role in the inhibition of TMEM173/STING-mediated type I interferon production. Interacts with host DOK2 and induces its degradation. This immune evasion mechanism to inactivate T-cells may play an important role during pathogenesis. This is Tegument protein UL46 from Homo sapiens (Human).